Reading from the N-terminus, the 743-residue chain is Isocitrate dehydrogenase [NADP] 2 (743 aa).

Positions 87 and 89 each coordinate NADP(+). 5 residues coordinate D-threo-isocitrate: Ser-134, Asn-137, Arg-141, Arg-147, and Lys-257. Asn-137 is a binding site for NADP(+). Mg(2+) is bound at residue Asp-352. D-threo-isocitrate-binding residues include Tyr-422 and Arg-549. Mg(2+)-binding residues include Asp-550 and Asp-554. Ser-587, His-591, Arg-602, Asp-604, and Arg-651 together coordinate NADP(+).

Belongs to the monomeric-type IDH family. Monomer. Mg(2+) is required as a cofactor. The cofactor is Mn(2+).

It catalyses the reaction D-threo-isocitrate + NADP(+) = 2-oxoglutarate + CO2 + NADPH. Catalyzes the oxidative decarboxylation of isocitrate to 2-oxoglutarate and carbon dioxide with the concomitant reduction of NADP(+). In Colwellia maris, this protein is Isocitrate dehydrogenase [NADP] 2 (icd2).